The primary structure comprises 297 residues: MIPFSVRVPASTANVGPGFDSVGIALSLYLDVVVKEKADKWQVIHSFEESIPADDKNLIVSTACKVCPSISPHIIEVTSNIPLTRGLGSSASAIVAGIELANQLGNLNLTADQKVQIATNFEGHPDNVAASILGGTVIGALDGKDVSVVRIESKELGVVSLIPNEELNTDESRSVLPKMFPFHEAVKASAISNVLVAALCQKRWEVVGEMMERDHFHEPYRLELVPLLPSIRKCAKEFGAYGTALSGAGPSIFILAPYEKRQEIAGQLARVFTDMKVCELEIDHKGIIVNKEEHIGS.

Residue 82–92 (PLTRGLGSSAS) participates in ATP binding.

It belongs to the GHMP kinase family. Homoserine kinase subfamily.

It is found in the cytoplasm. The catalysed reaction is L-homoserine + ATP = O-phospho-L-homoserine + ADP + H(+). Its pathway is amino-acid biosynthesis; L-threonine biosynthesis; L-threonine from L-aspartate: step 4/5. In terms of biological role, catalyzes the ATP-dependent phosphorylation of L-homoserine to L-homoserine phosphate. The chain is Homoserine kinase from Bacillus cereus (strain B4264).